The following is a 493-amino-acid chain: Hexokinase (493 aa).

The Hexokinase domain maps to 27–481; sequence EELSWRINKF…SGKGAAITAA (455 aa). Residues 91–239 are hexokinase small subdomain; sequence TGQEKGTYYA…AIPAKVCCVL (149 aa). 102–107 is an ATP binding site; that stretch reads DFGGTN. A glucose-binding region spans residues 177–203; that stretch reads SVGFTFSFPCTSPSINCSILIDWTKGF. The segment at 240 to 470 is hexokinase large subdomain; sequence NDAVGTLMSC…ENLIIIPADD (231 aa).

The protein belongs to the hexokinase family.

The enzyme catalyses a D-hexose + ATP = a D-hexose 6-phosphate + ADP + H(+). The catalysed reaction is D-mannose + ATP = D-mannose 6-phosphate + ADP + H(+). It carries out the reaction D-fructose + ATP = D-fructose 6-phosphate + ADP + H(+). It catalyses the reaction D-glucose + ATP = D-glucose 6-phosphate + ADP + H(+). It functions in the pathway carbohydrate metabolism; hexose metabolism. Its pathway is carbohydrate degradation; glycolysis; D-glyceraldehyde 3-phosphate and glycerone phosphate from D-glucose: step 1/4. In terms of biological role, catalyzes the phosphorylation of various hexoses to hexose 6-phosphate. This chain is Hexokinase (HK), found in Plasmodium falciparum.